The sequence spans 347 residues: MRILGIETSCDETGVAIYDEEKGLVANQLYSQIEMHADYGGVVPELASRDHIRKTLPLIQEALKEANLTAADIDGVVYTAGPGLVGALLVGSTIARSLAYAWNVPALGVHHMEGHLMAPMLEDNPPAFPFVALLISGGHTQLVKVEGVGQYEILGESIDDAAGEAFDKTGKLLGLDYPAGVAVSQLAEKGTPNRFVFPRPMTDRPGLDFSFSGLKTFAANTINANLDENGRLDEQTRCDIAHAFQQAVVDTIIIKCKRALQQTGYKRLVMAGGVSANKQLRTDLAEMMKNLKGEVYYPRPQFCTDNGAMIAYTGFLRLKNGETSDLSISVKPRWNMTELPDISTTGG.

Residues H111 and H115 each coordinate Fe cation. Substrate-binding positions include 134-138 (LISGG), D167, G180, and N277. D305 lines the Fe cation pocket.

It belongs to the KAE1 / TsaD family. Fe(2+) is required as a cofactor.

The protein resides in the cytoplasm. The catalysed reaction is L-threonylcarbamoyladenylate + adenosine(37) in tRNA = N(6)-L-threonylcarbamoyladenosine(37) in tRNA + AMP + H(+). Required for the formation of a threonylcarbamoyl group on adenosine at position 37 (t(6)A37) in tRNAs that read codons beginning with adenine. Is involved in the transfer of the threonylcarbamoyl moiety of threonylcarbamoyl-AMP (TC-AMP) to the N6 group of A37, together with TsaE and TsaB. TsaD likely plays a direct catalytic role in this reaction. In Actinobacillus pleuropneumoniae serotype 5b (strain L20), this protein is tRNA N6-adenosine threonylcarbamoyltransferase.